We begin with the raw amino-acid sequence, 251 residues long: Cell division protein ZapD (251 aa).

The protein belongs to the ZapD family. In terms of assembly, interacts with FtsZ.

It is found in the cytoplasm. Cell division factor that enhances FtsZ-ring assembly. Directly interacts with FtsZ and promotes bundling of FtsZ protofilaments, with a reduction in FtsZ GTPase activity. The protein is Cell division protein ZapD of Burkholderia cenocepacia (strain HI2424).